A 101-amino-acid polypeptide reads, in one-letter code: Small ribosomal subunit protein uS14 (101 aa).

The disordered stretch occupies residues 53–72 (RDAAAVRVRNRDSHDGRPRG). A compositionally biased stretch (basic and acidic residues) spans 61–70 (RNRDSHDGRP).

Belongs to the universal ribosomal protein uS14 family. In terms of assembly, part of the 30S ribosomal subunit. Contacts proteins S3 and S10.

Its function is as follows. Binds 16S rRNA, required for the assembly of 30S particles and may also be responsible for determining the conformation of the 16S rRNA at the A site. This is Small ribosomal subunit protein uS14 from Corynebacterium glutamicum (strain R).